Consider the following 133-residue polypeptide: Profilin-4 (133 aa).

A disulfide bridge links Cys13 with Cys117. Residues 83–99 (AVIRGKKGSGGITIKKT) carry the Involved in PIP2 interaction motif. Thr113 bears the Phosphothreonine mark.

This sequence belongs to the profilin family. As to quaternary structure, occurs in many kinds of cells as a complex with monomeric actin in a 1:1 ratio. In terms of processing, phosphorylated by MAP kinases.

It is found in the cytoplasm. The protein localises to the cytoskeleton. Binds to actin and affects the structure of the cytoskeleton. At high concentrations, profilin prevents the polymerization of actin, whereas it enhances it at low concentrations. In Corylus avellana (European hazel), this protein is Profilin-4.